We begin with the raw amino-acid sequence, 417 residues long: Multifunctional CCA protein (417 aa).

2 residues coordinate ATP: G8 and R11. CTP contacts are provided by G8 and R11. Mg(2+) contacts are provided by D21 and D23. R91, R137, and R140 together coordinate ATP. CTP is bound by residues R91, R137, and R140. The HD domain occupies 225-326 (SGIHTLMTLQ…LNVLKKTDAF (102 aa)).

It belongs to the tRNA nucleotidyltransferase/poly(A) polymerase family. Bacterial CCA-adding enzyme type 1 subfamily. As to quaternary structure, monomer. Can also form homodimers and oligomers. Requires Mg(2+) as cofactor. Ni(2+) serves as cofactor.

It carries out the reaction a tRNA precursor + 2 CTP + ATP = a tRNA with a 3' CCA end + 3 diphosphate. The catalysed reaction is a tRNA with a 3' CCA end + 2 CTP + ATP = a tRNA with a 3' CCACCA end + 3 diphosphate. In terms of biological role, catalyzes the addition and repair of the essential 3'-terminal CCA sequence in tRNAs without using a nucleic acid template. Adds these three nucleotides in the order of C, C, and A to the tRNA nucleotide-73, using CTP and ATP as substrates and producing inorganic pyrophosphate. tRNA 3'-terminal CCA addition is required both for tRNA processing and repair. Also involved in tRNA surveillance by mediating tandem CCA addition to generate a CCACCA at the 3' terminus of unstable tRNAs. While stable tRNAs receive only 3'-terminal CCA, unstable tRNAs are marked with CCACCA and rapidly degraded. The polypeptide is Multifunctional CCA protein (Neisseria meningitidis serogroup B (strain ATCC BAA-335 / MC58)).